Consider the following 464-residue polypeptide: Glutamate decarboxylase beta (464 aa).

Residue lysine 275 is modified to N6-(pyridoxal phosphate)lysine.

The protein belongs to the group II decarboxylase family. Pyridoxal 5'-phosphate serves as cofactor.

It carries out the reaction L-glutamate + H(+) = 4-aminobutanoate + CO2. In terms of biological role, converts internalized glutamate to GABA and increases the internal pH. Involved in glutamate-dependent acid resistance in gastric fluid. In Listeria innocua serovar 6a (strain ATCC BAA-680 / CLIP 11262), this protein is Glutamate decarboxylase beta (gadB).